The chain runs to 404 residues: Putative nitronate monooxygenase (404 aa).

41 to 43 (PMA) lines the FMN pocket. Catalysis depends on H224, which acts as the Proton acceptor. H224 serves as a coordination point for substrate. Residues 270 to 272 (AGG) and 293 to 294 (GT) each bind FMN.

The protein belongs to the nitronate monooxygenase family. NMO class I subfamily. FMN serves as cofactor.

It localises to the cytoplasm. It carries out the reaction ethylnitronate + O2 = chemical entity + acetaldehyde + nitrite + H(+). Its function is as follows. Catalyzes the oxidation of alkyl nitronates to produce the corresponding carbonyl compounds and nitrites. This chain is Putative nitronate monooxygenase, found in Saccharomyces cerevisiae (strain ATCC 204508 / S288c) (Baker's yeast).